A 648-amino-acid polypeptide reads, in one-letter code: NADP-dependent malic enzyme, chloroplastic (648 aa).

The transit peptide at 1-61 (MISLNSSFLE…VDSAVRDVNA (61 aa)) directs the protein to the chloroplast. Catalysis depends on Tyr195, which acts as the Proton donor. Arg248 is an NAD(+) binding site. Catalysis depends on Lys266, which acts as the Proton acceptor. A divalent metal cation is bound by residues Glu339, Asp340, and Asp363. Asp363 lines the NAD(+) pocket. An NADP(+)-binding site is contributed by 392–408 (LFLGAGEAGTGIAELIA). NAD(+) is bound at residue Asn504.

It belongs to the malic enzymes family. In terms of assembly, homotetramer. Requires Mg(2+) as cofactor. Mn(2+) is required as a cofactor.

The protein localises to the plastid. Its subcellular location is the chloroplast. It carries out the reaction (S)-malate + NADP(+) = pyruvate + CO2 + NADPH. The catalysed reaction is oxaloacetate + H(+) = pyruvate + CO2. It functions in the pathway photosynthesis; C4 acid pathway. The chloroplastic ME isoform decarboxylates malate shuttled from neighboring mesophyll cells. The CO(2) released is then refixed by ribulose-bisphosphate carboxylase. This pathway eliminates the photorespiratory loss of CO(2) that occurs in most plants. The sequence is that of NADP-dependent malic enzyme, chloroplastic (MOD1) from Flaveria trinervia (Clustered yellowtops).